The chain runs to 103 residues: Large ribosomal subunit protein bL21 (103 aa).

This sequence belongs to the bacterial ribosomal protein bL21 family. Part of the 50S ribosomal subunit. Contacts protein L20.

Functionally, this protein binds to 23S rRNA in the presence of protein L20. This Polynucleobacter necessarius subsp. necessarius (strain STIR1) protein is Large ribosomal subunit protein bL21.